A 94-amino-acid polypeptide reads, in one-letter code: Integration host factor subunit beta (94 aa).

This sequence belongs to the bacterial histone-like protein family. Heterodimer of an alpha and a beta chain.

This protein is one of the two subunits of integration host factor, a specific DNA-binding protein that functions in genetic recombination as well as in transcriptional and translational control. This Buchnera aphidicola subsp. Acyrthosiphon pisum (strain 5A) protein is Integration host factor subunit beta.